The following is a 364-amino-acid chain: Uroporphyrinogen decarboxylase (364 aa).

Substrate contacts are provided by residues 49–53 (RQAGR), D98, Y173, S228, and H341.

This sequence belongs to the uroporphyrinogen decarboxylase family. Homodimer.

Its subcellular location is the cytoplasm. The catalysed reaction is uroporphyrinogen III + 4 H(+) = coproporphyrinogen III + 4 CO2. The protein operates within porphyrin-containing compound metabolism; protoporphyrin-IX biosynthesis; coproporphyrinogen-III from 5-aminolevulinate: step 4/4. Its function is as follows. Catalyzes the decarboxylation of four acetate groups of uroporphyrinogen-III to yield coproporphyrinogen-III. The protein is Uroporphyrinogen decarboxylase of Protochlamydia amoebophila (strain UWE25).